We begin with the raw amino-acid sequence, 95 residues long: NADH-quinone oxidoreductase subunit K (95 aa).

A run of 3 helical transmembrane segments spans residues 1 to 21 (MSYL…VLTR), 25 to 45 (ILVF…LVGF), and 59 to 79 (MVIA…VAIF).

The protein belongs to the complex I subunit 4L family. As to quaternary structure, NDH-1 is composed of 15 different subunits. Subunits NuoA, H, J, K, L, M, N constitute the membrane sector of the complex.

Its subcellular location is the cell inner membrane. The catalysed reaction is a quinone + NADH + 5 H(+)(in) = a quinol + NAD(+) + 4 H(+)(out). Its function is as follows. NDH-1 shuttles electrons from NADH, via FMN and iron-sulfur (Fe-S) centers, to quinones in the respiratory chain. The immediate electron acceptor for the enzyme in this species is believed to be a menaquinone. Couples the redox reaction to proton translocation (for every two electrons transferred, four hydrogen ions are translocated across the cytoplasmic membrane), and thus conserves the redox energy in a proton gradient. The chain is NADH-quinone oxidoreductase subunit K from Thermus thermophilus (strain ATCC BAA-163 / DSM 7039 / HB27).